The following is a 527-amino-acid chain: Glutamate--cysteine ligase (527 aa).

It belongs to the glutamate--cysteine ligase type 1 family. Type 1 subfamily.

It carries out the reaction L-cysteine + L-glutamate + ATP = gamma-L-glutamyl-L-cysteine + ADP + phosphate + H(+). The protein operates within sulfur metabolism; glutathione biosynthesis; glutathione from L-cysteine and L-glutamate: step 1/2. The protein is Glutamate--cysteine ligase of Bordetella petrii (strain ATCC BAA-461 / DSM 12804 / CCUG 43448).